The primary structure comprises 363 residues: Ataxin-3 (363 aa).

Residues 1–180 (MESIFHERQE…DCEADQLLQM (180 aa)) enclose the Josephin domain. The Nucleophile role is filled by Cys-14. The active-site Proton acceptor is the His-119. Asn-134 is an active-site residue. The span at 192-209 (IGEETAQSRDQRLPRSDV) shows a compositional bias: basic and acidic residues. The tract at residues 192–212 (IGEETAQSRDQRLPRSDVDQA) is disordered. UIM domains lie at 227–246 (EDEE…IDME), 247–266 (DEEA…SRQS), and 337–356 (SEED…ARNH). Polar residues predominate over residues 260–290 (MQGSRQSEFSNSLPQNASQPPHTSQTDSLSS). The disordered stretch occupies residues 260-363 (MQGSRQSEFS…RNHLSTEEKK (104 aa)). Over residues 353–363 (ARNHLSTEEKK) the composition is skewed to basic and acidic residues.

Widely expressed.

The protein localises to the nucleus matrix. Its subcellular location is the nucleus. It localises to the lysosome membrane. The catalysed reaction is Thiol-dependent hydrolysis of ester, thioester, amide, peptide and isopeptide bonds formed by the C-terminal Gly of ubiquitin (a 76-residue protein attached to proteins as an intracellular targeting signal).. Its function is as follows. Deubiquitinating enzyme involved in protein homeostasis maintenance, transcription, cytoskeleton regulation, myogenesis and degradation of misfolded chaperone substrates. Binds long polyubiquitin chains and trims them, while it has weak or no activity against chains of 4 or less ubiquitins. Involved in degradation of misfolded chaperone substrates via its interaction with STUB1/CHIP: recruited to monoubiquitinated STUB1/CHIP, and restricts the length of ubiquitin chain attached to STUB1/CHIP substrates and preventing further chain extension. Interacts with key regulators of transcription and represses transcription: acts as a histone-binding protein that regulates transcription. Acts as a negative regulator of mTORC1 signaling in response to amino acid deprivation by mediating deubiquitination of RHEB, thereby promoting RHEB inactivation by the TSC-TBC complex. Regulates autophagy via the deubiquitination of 'Lys-402' of BECN1 leading to the stabilization of BECN1. This chain is Ataxin-3 (ATXN3), found in Gallus gallus (Chicken).